The sequence spans 316 residues: N-acetylmuramic acid 6-phosphate etherase (316 aa).

The tract at residues 1 to 24 is disordered; that stretch reads MTRFQSDAAVSADRGHLMTEQPNP. In terms of domain architecture, SIS spans 66-229; sequence IASRLKDGGR…STAVMVRLGK (164 aa). Glu94 serves as the catalytic Proton donor. Residue Glu125 is part of the active site.

It belongs to the GCKR-like family. MurNAc-6-P etherase subfamily. As to quaternary structure, homodimer.

It catalyses the reaction N-acetyl-D-muramate 6-phosphate + H2O = N-acetyl-D-glucosamine 6-phosphate + (R)-lactate. It participates in amino-sugar metabolism; N-acetylmuramate degradation. Its function is as follows. Specifically catalyzes the cleavage of the D-lactyl ether substituent of MurNAc 6-phosphate, producing GlcNAc 6-phosphate and D-lactate. In Parasynechococcus marenigrum (strain WH8102), this protein is N-acetylmuramic acid 6-phosphate etherase.